The primary structure comprises 86 residues: MVKIRLARHGSKKRPFYQIVVSDSRNARDGRFLENVGFFNPVASGKAEKLRLNIDRIEHWKNVGAELSERVQALVKAEKKNLQTAS.

It belongs to the bacterial ribosomal protein bS16 family.

The polypeptide is Small ribosomal subunit protein bS16 (Hamiltonella defensa subsp. Acyrthosiphon pisum (strain 5AT)).